A 121-amino-acid polypeptide reads, in one-letter code: Ribonuclease P protein component (121 aa).

It belongs to the RnpA family. Consists of a catalytic RNA component (M1 or rnpB) and a protein subunit.

It catalyses the reaction Endonucleolytic cleavage of RNA, removing 5'-extranucleotides from tRNA precursor.. In terms of biological role, RNaseP catalyzes the removal of the 5'-leader sequence from pre-tRNA to produce the mature 5'-terminus. It can also cleave other RNA substrates such as 4.5S RNA. The protein component plays an auxiliary but essential role in vivo by binding to the 5'-leader sequence and broadening the substrate specificity of the ribozyme. The sequence is that of Ribonuclease P protein component from Alcanivorax borkumensis (strain ATCC 700651 / DSM 11573 / NCIMB 13689 / SK2).